Consider the following 59-residue polypeptide: Large ribosomal subunit protein bL32 (59 aa).

Residues 1–22 (MAVPKKKTSNSKRDSRRAHWNR) show a composition bias toward basic residues. Positions 1-59 (MAVPKKKTSNSKRDSRRAHWNRKANLAAQRALSTGKSILTGRAKGFEYPTKDDDEDDDE) are disordered.

Belongs to the bacterial ribosomal protein bL32 family.

The polypeptide is Large ribosomal subunit protein bL32 (Acaryochloris marina (strain MBIC 11017)).